The chain runs to 175 residues: NADH-ubiquinone oxidoreductase chain 6 (175 aa).

6 helical membrane passes run 1–21 (MMAYIGFILSIMFVISFVGFS), 25–45 (SPIYGGLVLIMSGGFGCGIVM), 47–67 (FGGSFLGLMVFLIYLGGMLVV), 87–107 (AAVLGAFVLGVLMEVVLVLYV), 116–136 (VFNFSGVGDWAVSDNGGFGVF), and 149–169 (YGVWIIIVTGWSLFVGVLVIL).

Belongs to the complex I subunit 6 family. As to quaternary structure, core subunit of respiratory chain NADH dehydrogenase (Complex I) which is composed of 45 different subunits.

The protein localises to the mitochondrion inner membrane. The enzyme catalyses a ubiquinone + NADH + 5 H(+)(in) = a ubiquinol + NAD(+) + 4 H(+)(out). In terms of biological role, core subunit of the mitochondrial membrane respiratory chain NADH dehydrogenase (Complex I) which catalyzes electron transfer from NADH through the respiratory chain, using ubiquinone as an electron acceptor. Essential for the catalytic activity and assembly of complex I. The sequence is that of NADH-ubiquinone oxidoreductase chain 6 (MT-ND6) from Ceratotherium simum (White rhinoceros).